The chain runs to 139 residues: Arsenate reductase (139 aa).

Catalysis depends on nucleophile residues C10, C82, and C89. Intrachain disulfides connect C10–C82 and C82–C89.

Belongs to the low molecular weight phosphotyrosine protein phosphatase family. Thioredoxin-coupled ArsC subfamily.

The protein localises to the cytoplasm. It carries out the reaction arsenate + [thioredoxin]-dithiol + H(+) = arsenite + [thioredoxin]-disulfide + H2O. In terms of biological role, catalyzes the reduction of arsenate [As(V)] to arsenite [As(III)]. This chain is Arsenate reductase, found in Bacillus licheniformis (strain ATCC 14580 / DSM 13 / JCM 2505 / CCUG 7422 / NBRC 12200 / NCIMB 9375 / NCTC 10341 / NRRL NRS-1264 / Gibson 46).